Here is a 216-residue protein sequence, read N- to C-terminus: Adenylate kinase (216 aa).

An ATP-binding site is contributed by 10–15; the sequence is GSGKGT. Positions 30–59 are NMP; the sequence is STGEILRKEIKKNKKTKKYIKKTINKGKLI. Residues threonine 31, arginine 36, 57–59, 85–88, and glutamine 92 contribute to the AMP site; these read KLI and GFPR. The segment at 121-158 is LID; it reads GRLIHASSGRTYHKIFNPPKIKNKDDITQEKLCSRNDD. ATP is bound by residues arginine 122 and 131–132; that span reads TY. Positions 155 and 166 each coordinate AMP. ATP is bound at residue glutamine 196.

Belongs to the adenylate kinase family. As to quaternary structure, monomer.

The protein resides in the cytoplasm. The enzyme catalyses AMP + ATP = 2 ADP. The protein operates within purine metabolism; AMP biosynthesis via salvage pathway; AMP from ADP: step 1/1. Catalyzes the reversible transfer of the terminal phosphate group between ATP and AMP. Plays an important role in cellular energy homeostasis and in adenine nucleotide metabolism. The chain is Adenylate kinase from Buchnera aphidicola subsp. Cinara cedri (strain Cc).